The chain runs to 84 residues: Sulfur carrier protein TusA (84 aa).

Catalysis depends on Cys-21, which acts as the Cysteine persulfide intermediate.

This sequence belongs to the sulfur carrier protein TusA family.

Its subcellular location is the cytoplasm. Its function is as follows. Sulfur carrier protein which probably makes part of a sulfur-relay system. In Pseudomonas syringae pv. tomato (strain ATCC BAA-871 / DC3000), this protein is Sulfur carrier protein TusA.